A 44-amino-acid chain; its full sequence is Conotoxin Fi11.11 (44 aa).

4 disulfide bridges follow: Cys-1-Cys-15, Cys-8-Cys-20, Cys-14-Cys-24, and Cys-19-Cys-28. Asparagine amide is present on Asn-30. The propeptide occupies 35–44 (QVPLKSFGQR).

The protein belongs to the conotoxin I2 superfamily. As to expression, expressed by the venom duct.

It is found in the secreted. The polypeptide is Conotoxin Fi11.11 (Conus figulinus (Fig cone)).